A 744-amino-acid polypeptide reads, in one-letter code: Cullin-1 (744 aa).

The Cullin neddylation domain occupies 674–736 (DRRYAIDASI…RDYLERDKDN (63 aa)).

The protein belongs to the cullin family. Part of a SCF (SKP1-CUL1-F-box protein) E3 ubiquitin-protein ligase complex. Is able to form the SCF complex together with SKP1 and the rice black streaked dwarf virus RBSDV protein P7-2. Interacts with D3. Neddylated (rubylated). Deneddylation occurs upon interaction with the COP9 signalosome (CSN) complex. As to expression, expressed in dry seeds and coleoptiles.

Functionally, involved in ubiquitination and subsequent proteasomal degradation of target proteins. This Oryza sativa subsp. japonica (Rice) protein is Cullin-1.